We begin with the raw amino-acid sequence, 421 residues long: Replication-associated recombination protein A (421 aa).

45–52 (GPPGIGKT) contributes to the ATP binding site.

The protein belongs to the AAA ATPase family. RarA/MGS1/WRNIP1 subfamily. In terms of assembly, homotetramer. Interacts with single-stranded binding protein SsbA. May interact with PriA.

It localises to the cytoplasm. The protein localises to the nucleoid. With respect to regulation, ssDNA-dependent ATP hydrolysis is stimulated by single-stranded binding protein SsbA but not by SsbB; in the presence of SsbB, ssDNA secondary structure is removed and RarA's ATPase activity is decreased. The C-terminal 9 residues of SsbA are sufficient to stimulate ATPase activity. Functionally, plays a role in recombination-dependent DNA replication. Positively affects the formation of RecA threads during response to DNA damage, directly or indirectly counteracting the negative RecA modulators RecX and RecU. Stabilizes a RecA-ssDNA complex. In vitro, in the presence of SsbA, inhibits PriA-dependent DNA replication restart of both leading and lagging strands; elongation is insensitive to RarA. Plays a role in response to DNA damage, localizes to the replication fork but also to DNA elsewhere in the cell. Probably required for repair of single-stranded nicks generated by H(2)O(2). Epistatic to RecA, partially represses deletions of the error-prone translesion DNA polymerases (dinB1 and dinB2), genetically interacts with replicative helicase loaders dnaB and dnaD. Epistatic to recF and recO mutations upon DNA damage. A DNA-dependent ATPase stimulated by hairpin structures in circular single-stranded (ss)DNA or ssDNA-dsDNA junctions, by blunt end and 5'-tailed dsDNA and by single-stranded binding protein SsbA protein bound to ssDNA. Preferentially binds ssDNA and replication-fork structures; SsbA stimulates binding to ssDNA. Addition of ATP to the protein has no visible effect in vitro. The polypeptide is Replication-associated recombination protein A (Bacillus subtilis (strain 168)).